Consider the following 331-residue polypeptide: Large ribosomal subunit protein uL3 (331 aa).

Belongs to the universal ribosomal protein uL3 family. In terms of assembly, part of the 50S ribosomal subunit. Forms a cluster with proteins L14 and L24e.

Functionally, one of the primary rRNA binding proteins, it binds directly near the 3'-end of the 23S rRNA, where it nucleates assembly of the 50S subunit. The chain is Large ribosomal subunit protein uL3 from Thermoplasma volcanium (strain ATCC 51530 / DSM 4299 / JCM 9571 / NBRC 15438 / GSS1).